A 312-amino-acid polypeptide reads, in one-letter code: Porphobilinogen deaminase (312 aa).

At Cys235 the chain carries S-(dipyrrolylmethanemethyl)cysteine.

It belongs to the HMBS family. In terms of assembly, monomer. Dipyrromethane serves as cofactor.

The catalysed reaction is 4 porphobilinogen + H2O = hydroxymethylbilane + 4 NH4(+). The protein operates within porphyrin-containing compound metabolism; protoporphyrin-IX biosynthesis; coproporphyrinogen-III from 5-aminolevulinate: step 2/4. Tetrapolymerization of the monopyrrole PBG into the hydroxymethylbilane pre-uroporphyrinogen in several discrete steps. This chain is Porphobilinogen deaminase, found in Mycolicibacterium gilvum (strain PYR-GCK) (Mycobacterium gilvum (strain PYR-GCK)).